Consider the following 178-residue polypeptide: Crossover junction endodeoxyribonuclease RuvC (178 aa).

Active-site residues include Asp-7, Glu-68, and Asp-141. The Mg(2+) site is built by Asp-7, Glu-68, and Asp-141.

The protein belongs to the RuvC family. Homodimer which binds Holliday junction (HJ) DNA. The HJ becomes 2-fold symmetrical on binding to RuvC with unstacked arms; it has a different conformation from HJ DNA in complex with RuvA. In the full resolvosome a probable DNA-RuvA(4)-RuvB(12)-RuvC(2) complex forms which resolves the HJ. It depends on Mg(2+) as a cofactor.

Its subcellular location is the cytoplasm. The catalysed reaction is Endonucleolytic cleavage at a junction such as a reciprocal single-stranded crossover between two homologous DNA duplexes (Holliday junction).. The RuvA-RuvB-RuvC complex processes Holliday junction (HJ) DNA during genetic recombination and DNA repair. Endonuclease that resolves HJ intermediates. Cleaves cruciform DNA by making single-stranded nicks across the HJ at symmetrical positions within the homologous arms, yielding a 5'-phosphate and a 3'-hydroxyl group; requires a central core of homology in the junction. The consensus cleavage sequence is 5'-(A/T)TT(C/G)-3'. Cleavage occurs on the 3'-side of the TT dinucleotide at the point of strand exchange. HJ branch migration catalyzed by RuvA-RuvB allows RuvC to scan DNA until it finds its consensus sequence, where it cleaves and resolves the cruciform DNA. The protein is Crossover junction endodeoxyribonuclease RuvC of Parafrankia sp. (strain EAN1pec).